The primary structure comprises 57 residues: UPF0391 membrane protein azo1765 (57 aa).

The next 2 helical transmembrane spans lie at methionine 1–threonine 21 and valine 33–glycine 53.

This sequence belongs to the UPF0391 family.

It localises to the cell membrane. This is UPF0391 membrane protein azo1765 from Azoarcus sp. (strain BH72).